Consider the following 70-residue polypeptide: Small ribosomal subunit protein bS21C (70 aa).

A disordered region spans residues 38–70; sequence YEKPTTERKRKKAAAVARLRKQVRRSMPPKKKY. Residues 45–70 are compositionally biased toward basic residues; it reads RKRKKAAAVARLRKQVRRSMPPKKKY.

It belongs to the bacterial ribosomal protein bS21 family.

The chain is Small ribosomal subunit protein bS21C from Burkholderia thailandensis (strain ATCC 700388 / DSM 13276 / CCUG 48851 / CIP 106301 / E264).